Consider the following 261-residue polypeptide: Mlc titration factor A (261 aa).

The Zn(2+) site is built by His111, His148, His152, and Glu211.

Belongs to the MtfA family. Interacts with Mlc. Zn(2+) is required as a cofactor.

Its subcellular location is the cytoplasm. Its function is as follows. Involved in the modulation of the activity of the glucose-phosphotransferase system (glucose-PTS). Interacts with the transcriptional repressor Mlc, preventing its interaction with DNA and leading to the modulation of expression of genes regulated by Mlc, including ptsG, which encodes the PTS system glucose-specific EIICB component. Shows zinc-dependent metallopeptidase activity. The polypeptide is Mlc titration factor A (Edwardsiella ictaluri (strain 93-146)).